The following is a 77-amino-acid chain: uncharacterized protein (77 aa).

The segment at 54–77 is disordered; the sequence is HHGRKHKEDMEARHEQLTKGGTIL. Basic and acidic residues predominate over residues 59–70; that stretch reads HKEDMEARHEQL.

This is an uncharacterized protein from Escherichia coli O157:H7.